Here is a 355-residue protein sequence, read N- to C-terminus: UDP-3-O-acylglucosamine N-acyltransferase (355 aa).

Residue H252 is the Proton acceptor of the active site.

The protein belongs to the transferase hexapeptide repeat family. LpxD subfamily. In terms of assembly, homotrimer.

It carries out the reaction a UDP-3-O-[(3R)-3-hydroxyacyl]-alpha-D-glucosamine + a (3R)-hydroxyacyl-[ACP] = a UDP-2-N,3-O-bis[(3R)-3-hydroxyacyl]-alpha-D-glucosamine + holo-[ACP] + H(+). It participates in bacterial outer membrane biogenesis; LPS lipid A biosynthesis. Its function is as follows. Catalyzes the N-acylation of UDP-3-O-acylglucosamine using 3-hydroxyacyl-ACP as the acyl donor. Is involved in the biosynthesis of lipid A, a phosphorylated glycolipid that anchors the lipopolysaccharide to the outer membrane of the cell. In Polynucleobacter necessarius subsp. necessarius (strain STIR1), this protein is UDP-3-O-acylglucosamine N-acyltransferase.